A 488-amino-acid polypeptide reads, in one-letter code: Fumarate hydratase, mitochondrial (488 aa).

The transit peptide at 1 to 24 (MLRFTNCSCKTFVKSSYKLNIRRM) directs the protein to the mitochondrion. Substrate is bound by residues 124–126 (SGT), 154–157 (HPNN), 164–166 (SSN), and Thr212. His213 (proton donor/acceptor) is an active-site residue. The active site involves Ser343. Substrate contacts are provided by residues Ser344 and 349–351 (KVN). A Phosphothreonine modification is found at Thr428.

This sequence belongs to the class-II fumarase/aspartase family. Fumarase subfamily. Homotetramer.

Its subcellular location is the mitochondrion matrix. It is found in the cytoplasm. The protein localises to the nucleus. It catalyses the reaction (S)-malate = fumarate + H2O. It participates in carbohydrate metabolism; tricarboxylic acid cycle; (S)-malate from fumarate: step 1/1. Catalyzes the reversible stereospecific interconversion of fumarate to L-malate. In mitochondrion, catalyzes the hydration of fumarate to L-malate in the tricarboxylic acid (TCA) cycle to facilitate a transition step in the production of energy in the form of NADH. In cytoplasm and nucleus, involved in DNA repair in response to DNA damage: following DNA double-strand breaks (DSBs), translocates from the cytosol to the nucleus and promotes DNA repair by catalyzing the dehydration of L-malate to fumarate. This is Fumarate hydratase, mitochondrial from Saccharomyces cerevisiae (strain ATCC 204508 / S288c) (Baker's yeast).